We begin with the raw amino-acid sequence, 503 residues long: Na(+)-translocating NADH-quinone reductase subunit B (503 aa).

Transmembrane regions (helical) follow at residues 55 to 75, 85 to 105, 120 to 142, 161 to 181, and 186 to 206; these read MMLV…NSGL, PQIM…SFVS, IFLP…FAII, ILPP…GVVI, and FGGT…FLFF. The residue at position 248 (Thr-248) is an FMN phosphoryl threonine. Helical transmembrane passes span 361–381, 387–407, 417–437, 452–472, and 475–495; these read TSTV…IASW, FGLS…LAAG, FFIP…LVFM, WFYG…NPAY, and GVML…RIAL.

The protein belongs to the NqrB/RnfD family. In terms of assembly, composed of six subunits; NqrA, NqrB, NqrC, NqrD, NqrE and NqrF. FMN serves as cofactor.

The protein localises to the cell inner membrane. It carries out the reaction a ubiquinone + n Na(+)(in) + NADH + H(+) = a ubiquinol + n Na(+)(out) + NAD(+). NQR complex catalyzes the reduction of ubiquinone-1 to ubiquinol by two successive reactions, coupled with the transport of Na(+) ions from the cytoplasm to the periplasm. NqrA to NqrE are probably involved in the second step, the conversion of ubisemiquinone to ubiquinol. This Chlamydia muridarum (strain MoPn / Nigg) protein is Na(+)-translocating NADH-quinone reductase subunit B.